The sequence spans 181 residues: Adenylate kinase (181 aa).

ATP is bound at residue Gly10–Thr15. The NMP stretch occupies residues Ser30–Val59. Residues Thr31, Arg36, Asp57–Val59, Gly85–Arg88, and Gln92 contribute to the AMP site. The LID stretch occupies residues Gly126 to Asp132. Residue Arg127 coordinates ATP. Residues Arg129 and Arg140 each contribute to the AMP site. Gly166 lines the ATP pocket.

This sequence belongs to the adenylate kinase family. Monomer.

Its subcellular location is the cytoplasm. The catalysed reaction is AMP + ATP = 2 ADP. The protein operates within purine metabolism; AMP biosynthesis via salvage pathway; AMP from ADP: step 1/1. Catalyzes the reversible transfer of the terminal phosphate group between ATP and AMP. Plays an important role in cellular energy homeostasis and in adenine nucleotide metabolism. The sequence is that of Adenylate kinase from Mycobacteroides abscessus (strain ATCC 19977 / DSM 44196 / CCUG 20993 / CIP 104536 / JCM 13569 / NCTC 13031 / TMC 1543 / L948) (Mycobacterium abscessus).